A 110-amino-acid chain; its full sequence is MALWIRFLPLLALLILWEPRPAQAFVKQHLCGSHLVEALYLVCGERGFFYTPMSRREVEDPQVAQLELGGGPGAGDLQTLALEVARQKRGIVDQCCTSICSLYQLENYCN.

An N-terminal signal peptide occupies residues 1-24 (MALWIRFLPLLALLILWEPRPAQA). Cystine bridges form between C31–C96, C43–C109, and C95–C100. Positions 57–87 (EVEDPQVAQLELGGGPGAGDLQTLALEVARQ) are cleaved as a propeptide — c peptide.

This sequence belongs to the insulin family. As to quaternary structure, heterodimer of a B chain and an A chain linked by two disulfide bonds.

Its subcellular location is the secreted. In terms of biological role, insulin decreases blood glucose concentration. It increases cell permeability to monosaccharides, amino acids and fatty acids. It accelerates glycolysis, the pentose phosphate cycle, and glycogen synthesis in liver. The chain is Insulin-2 (Ins2) from Rattus norvegicus (Rat).